The following is a 264-amino-acid chain: 3-methyl-2-oxobutanoate hydroxymethyltransferase (264 aa).

Mg(2+)-binding residues include aspartate 45 and aspartate 84. 3-methyl-2-oxobutanoate is bound by residues 45 to 46, aspartate 84, and lysine 113; that span reads DS. Glutamate 115 contributes to the Mg(2+) binding site. Glutamate 182 acts as the Proton acceptor in catalysis.

This sequence belongs to the PanB family. As to quaternary structure, homodecamer; pentamer of dimers. Mg(2+) is required as a cofactor.

It localises to the cytoplasm. The catalysed reaction is 3-methyl-2-oxobutanoate + (6R)-5,10-methylene-5,6,7,8-tetrahydrofolate + H2O = 2-dehydropantoate + (6S)-5,6,7,8-tetrahydrofolate. Its pathway is cofactor biosynthesis; (R)-pantothenate biosynthesis; (R)-pantoate from 3-methyl-2-oxobutanoate: step 1/2. Catalyzes the reversible reaction in which hydroxymethyl group from 5,10-methylenetetrahydrofolate is transferred onto alpha-ketoisovalerate to form ketopantoate. The protein is 3-methyl-2-oxobutanoate hydroxymethyltransferase of Nitrosococcus oceani (strain ATCC 19707 / BCRC 17464 / JCM 30415 / NCIMB 11848 / C-107).